We begin with the raw amino-acid sequence, 1006 residues long: Probable sulfite reductase [NADPH] flavoprotein component (1006 aa).

One can recognise an FAD-binding FR-type domain in the interval E622–P852. Residues Y658 to V669 and I788 to S798 each bind FAD.

It depends on FAD as a cofactor. FMN is required as a cofactor.

The catalysed reaction is hydrogen sulfide + 3 NADP(+) + 3 H2O = sulfite + 3 NADPH + 4 H(+). The protein operates within sulfur metabolism; hydrogen sulfide biosynthesis; hydrogen sulfide from sulfite (NADPH route): step 1/1. Functionally, this enzyme catalyzes the 6-electron reduction of sulfite to sulfide. This is one of several activities required for the biosynthesis of L-cysteine from sulfate. The chain is Probable sulfite reductase [NADPH] flavoprotein component from Schizosaccharomyces pombe (strain 972 / ATCC 24843) (Fission yeast).